Consider the following 206-residue polypeptide: MHNIKGGTKNPFLSGRKRPHFEEVEAAIRTLLLWIGENPNREGLLDTPRRVAKAYRDLFIGYGESVEEILGTVFEEVSGYNEPVIVKDISFYSHCEHHMIPIVGKAHIAYLPDEKVVGLSKIARIVDVFSRRLQTQETMTAQIADALEEYLKPCGIAVLIEAEHMCMTMRGVQKQGATTITTSFHGSYEKDQVAQTNFMMIVRRSS.

Residues Cys95, His98, and Cys166 each contribute to the Zn(2+) site.

This sequence belongs to the GTP cyclohydrolase I family. Toroid-shaped homodecamer, composed of two pentamers of five dimers.

The catalysed reaction is GTP + H2O = 7,8-dihydroneopterin 3'-triphosphate + formate + H(+). It participates in cofactor biosynthesis; 7,8-dihydroneopterin triphosphate biosynthesis; 7,8-dihydroneopterin triphosphate from GTP: step 1/1. The chain is GTP cyclohydrolase 1 from Bartonella quintana (strain Toulouse) (Rochalimaea quintana).